A 191-amino-acid chain; its full sequence is MSIKSDRWIRKMAEEHGMIEPFEAGQVRFNDAGERLVSYGTSSYGYDVRCAPEFKVFTNVHSVIVDPKNFDEKSFIDIIGDECIIPPNSFALARTMEYFRIPRDVLTICLGKSTYARCGIIVNVTPLEPEWEGHVTLEFSNTTNLPARIYAGEGVAQMLFFQSDADDVCETSYKDRGGKYQGQRGVTLPRT.

Residues 112–117 (KSTYAR), 136–138 (TLE), Gln157, Tyr173, and Gln183 contribute to the dCTP site. Catalysis depends on Glu138, which acts as the Proton donor/acceptor.

This sequence belongs to the dCTP deaminase family. In terms of assembly, homotrimer.

The enzyme catalyses dCTP + H2O + H(+) = dUTP + NH4(+). The protein operates within pyrimidine metabolism; dUMP biosynthesis; dUMP from dCTP (dUTP route): step 1/2. In terms of biological role, catalyzes the deamination of dCTP to dUTP. This chain is dCTP deaminase, found in Psychrobacter arcticus (strain DSM 17307 / VKM B-2377 / 273-4).